Consider the following 222-residue polypeptide: Endonuclease V (222 aa).

Mg(2+) contacts are provided by Asp-43 and Asp-109.

This sequence belongs to the endonuclease V family. Mg(2+) serves as cofactor.

It is found in the cytoplasm. The catalysed reaction is Endonucleolytic cleavage at apurinic or apyrimidinic sites to products with a 5'-phosphate.. Functionally, DNA repair enzyme involved in the repair of deaminated bases. Selectively cleaves double-stranded DNA at the second phosphodiester bond 3' to a deoxyinosine leaving behind the intact lesion on the nicked DNA. In Roseiflexus castenholzii (strain DSM 13941 / HLO8), this protein is Endonuclease V.